The chain runs to 314 residues: Probable cell division protein WhiA (314 aa).

A DNA-binding region (H-T-H motif) is located at residues 274-308; it reads SLKELGEMVSTGPISKSGVNHRLRKLNDLADKIRN.

This sequence belongs to the WhiA family.

Functionally, involved in cell division and chromosome segregation. This chain is Probable cell division protein WhiA, found in Staphylococcus aureus (strain Mu3 / ATCC 700698).